Consider the following 500-residue polypeptide: Lysine--tRNA ligase (500 aa).

Residues E410 and E417 each contribute to the Mg(2+) site.

The protein belongs to the class-II aminoacyl-tRNA synthetase family. Homodimer. Mg(2+) is required as a cofactor.

The protein resides in the cytoplasm. The catalysed reaction is tRNA(Lys) + L-lysine + ATP = L-lysyl-tRNA(Lys) + AMP + diphosphate. In Shewanella frigidimarina (strain NCIMB 400), this protein is Lysine--tRNA ligase.